Consider the following 369-residue polypeptide: Caffeine synthase 1 (369 aa).

Tyr-24 provides a ligand contact to S-adenosyl-L-homocysteine. Thr-31 lines the caffeine pocket. Positions 66, 71, 103, 104, 138, and 139 each coordinate S-adenosyl-L-homocysteine. Tyr-156, His-159, and Trp-160 together coordinate caffeine. Asn-177 contacts Mg(2+). Arg-225 serves as a coordination point for caffeine. Residues Asp-263, Phe-265, and Asn-266 each coordinate Mg(2+). Caffeine is bound at residue Phe-321.

This sequence belongs to the methyltransferase superfamily. Type-7 methyltransferase family. Mg(2+) is required as a cofactor.

It catalyses the reaction theobromine + S-adenosyl-L-methionine = caffeine + S-adenosyl-L-homocysteine + H(+). It carries out the reaction 7-methylxanthine + S-adenosyl-L-methionine = theobromine + S-adenosyl-L-homocysteine + H(+). It functions in the pathway alkaloid biosynthesis. Involved in the biosynthesis of caffeine. Catalyzes the conversion of 7-methylxanthine (7mX) to theobromine and of theobromine to caffeine. The polypeptide is Caffeine synthase 1 (Camellia taliensis (Wild tea)).